Here is a 516-residue protein sequence, read N- to C-terminus: Putative thymidine phosphorylase (516 aa).

This sequence belongs to the thymidine/pyrimidine-nucleoside phosphorylase family. Type 2 subfamily.

The catalysed reaction is thymidine + phosphate = 2-deoxy-alpha-D-ribose 1-phosphate + thymine. The protein is Putative thymidine phosphorylase of Methylococcus capsulatus (strain ATCC 33009 / NCIMB 11132 / Bath).